The sequence spans 101 residues: Small ribosomal subunit protein uS14 (101 aa).

It belongs to the universal ribosomal protein uS14 family. In terms of assembly, part of the 30S ribosomal subunit. Contacts proteins S3 and S10.

Its function is as follows. Binds 16S rRNA, required for the assembly of 30S particles and may also be responsible for determining the conformation of the 16S rRNA at the A site. The protein is Small ribosomal subunit protein uS14 of Buchnera aphidicola subsp. Acyrthosiphon pisum (strain APS) (Acyrthosiphon pisum symbiotic bacterium).